Here is a 721-residue protein sequence, read N- to C-terminus: mRNA (2'-O-methyladenosine-N(6)-)-methyltransferase (721 aa).

Composition is skewed to polar residues over residues 1–10 and 19–36; these read MTSENHTTIK and PTGS…TSKP. Residues 1-37 are disordered; the sequence is MTSENHTTIKADSALVMSPTGSTSQAAPFSPSTSKPI. The 35-residue stretch at 43–77 folds into the WW domain; that stretch reads ELIQAGWSKCWSKRENRPYYFNRFTNQSLWEMPVL. The segment at 93-170 is disordered; the sequence is PASGEANADA…KQGQASTPAP (78 aa). Residues 132 to 148 are compositionally biased toward low complexity; that stretch reads IPATPTTPTVPISPSTP. The substrate site is built by arginine 239 and arginine 269. 558–561 contacts S-adenosyl-L-methionine; the sequence is NPPF. Residues glutamate 563 and 593–597 each bind substrate; that span reads WRDPP. 619–621 is an S-adenosyl-L-methionine binding site; sequence FEH. Residues 675–686 show a composition bias toward low complexity; sequence SGRSLPSPGPSS. Positions 675–721 are disordered; the sequence is SGRSLPSPGPSSTNTGEKDSKPAPERTAPSQDNSSPVDKTAQDTTNT. The span at 702 to 721 shows a compositional bias: polar residues; sequence APSQDNSSPVDKTAQDTTNT.

It belongs to the CAPAM family.

It is found in the nucleus. It catalyses the reaction a 5'-end (N(7)-methyl 5'-triphosphoguanosine)-(2'-O-methyladenosine) in mRNA + S-adenosyl-L-methionine = a 5'-end (N(7)-methyl 5'-triphosphoguanosine)-(N(6),2'-O-dimethyladenosine) in mRNA + S-adenosyl-L-homocysteine + H(+). Its activity is regulated as follows. Cap-specific adenosine methyltransferase activity is inhibited by zinc. Its function is as follows. Cap-specific adenosine methyltransferase that catalyzes formation of N(6),2'-O-dimethyladenosine cap (m6A(m)) by methylating the adenosine at the second transcribed position of capped mRNAs. The protein is mRNA (2'-O-methyladenosine-N(6)-)-methyltransferase (pcif1) of Danio rerio (Zebrafish).